The following is a 177-amino-acid chain: Mitochondrial inner membrane protease subunit 2 (177 aa).

Residues Ser-41 and Lys-91 contribute to the active site. Residues 134-152 traverse the membrane as a helical segment; that stretch reads TFGPISSGLVIGKAITIVW.

It belongs to the peptidase S26 family. IMP2 subfamily. In terms of assembly, component of the mitochondrial inner membrane peptidase (IMP) complex which at least consists of IMP1, IMP2 and SOM1. The N-terminus is blocked.

Its subcellular location is the mitochondrion inner membrane. Catalytic component of the mitochondrial inner membrane peptidase (IMP) complex. IMP catalyzes the removal of signal peptides required for the targeting of proteins from the mitochondrial matrix, across the inner membrane, into the inter-membrane space. The two catalytic IMP subunits seem to have non-overlapping substrate specificities. IMP2 substrates include nuclear encoded CYB2, mitochondrially encoded COX2 and cytochrome c1. Required for the stability of IMP1. This is Mitochondrial inner membrane protease subunit 2 (IMP2) from Saccharomyces cerevisiae (strain ATCC 204508 / S288c) (Baker's yeast).